The sequence spans 26 residues: Conotoxin reg6(gamma) (26 aa).

A compositionally biased stretch (acidic residues) spans 1–12; that stretch reads RVLEPGXEDPDV. The segment at 1–26 is disordered; the sequence is RVLEPGXEDPDVGEPAGEYEHHLLEX. Glutamate 4 bears the 4-carboxyglutamate mark. A 4-hydroxyproline modification is found at proline 5. Position 8 is a 4-carboxyglutamate (glutamate 8). At proline 10 the chain carries 4-hydroxyproline. The residue at position 14 (glutamate 14) is a 4-carboxyglutamate. The residue at position 15 (proline 15) is a 4-hydroxyproline. 4-carboxyglutamate occurs at positions 18, 20, and 25.

As to expression, expressed by the venom duct.

The protein resides in the secreted. In Conus regius (Crown cone), this protein is Conotoxin reg6(gamma).